Reading from the N-terminus, the 370-residue chain is Cytochrome b (370 aa).

Helical transmembrane passes span 25 to 45 (FGSM…FLAV), 69 to 90 (WMMQ…YIHI), 105 to 125 (WLSG…GYVL), and 170 to 190 (FFAL…LHIL). Heme b contacts are provided by histidine 75 and histidine 89. Heme b is bound by residues histidine 174 and histidine 188. A ubiquinone is bound at residue histidine 193. 4 consecutive transmembrane segments (helical) span residues 218–238 (YKDM…VSFF), 280–300 (LGGA…PFTH), 312–332 (FMQL…WTAT), and 339–358 (FTTI…ISNP).

The protein belongs to the cytochrome b family. In terms of assembly, the cytochrome bc1 complex contains 3 respiratory subunits (MT-CYB, CYC1 and UQCRFS1), 2 core proteins (UQCRC1 and UQCRC2) and probably 6 low-molecular weight proteins. The cofactor is heme b.

It localises to the mitochondrion inner membrane. Functionally, component of the ubiquinol-cytochrome c reductase complex (complex III or cytochrome b-c1 complex) that is part of the mitochondrial respiratory chain. The b-c1 complex mediates electron transfer from ubiquinol to cytochrome c. Contributes to the generation of a proton gradient across the mitochondrial membrane that is then used for ATP synthesis. The polypeptide is Cytochrome b (MT-CYB) (Chilabothrus strigilatus fosteri (Bimini Island boa constrictor)).